The following is a 129-amino-acid chain: Sulfurtransferase TusD (129 aa).

The active-site Cysteine persulfide intermediate is Cys-79.

Belongs to the DsrE/TusD family. As to quaternary structure, heterohexamer, formed by a dimer of trimers. The hexameric TusBCD complex contains 2 copies each of TusB, TusC and TusD. The TusBCD complex interacts with TusE.

It localises to the cytoplasm. In terms of biological role, part of a sulfur-relay system required for 2-thiolation of 5-methylaminomethyl-2-thiouridine (mnm(5)s(2)U) at tRNA wobble positions. Accepts sulfur from TusA and transfers it in turn to TusE. The chain is Sulfurtransferase TusD from Pectobacterium atrosepticum (strain SCRI 1043 / ATCC BAA-672) (Erwinia carotovora subsp. atroseptica).